Consider the following 432-residue polypeptide: Luc7-like protein 3 (432 aa).

N-acetylmethionine is present on M1. A phosphoserine mark is found at S3, S110, and S115. Positions 124 to 181 (KNEEKIQVLTDKIDVLLQQIEELGSEGKVEEAQGMMKLVEQLKEERELLRSTTSTIES) form a coiled coil. K231 bears the N6-acetyllysine mark. Over residues 234–287 (LRKRTEEPDRDERLKKEKQEREEREKEREREREERERKRRREEEEREKERARDR) the composition is skewed to basic and acidic residues. The tract at residues 234–432 (LRKRTEEPDR…IKSEGDTQSN (199 aa)) is disordered. Positions 288–301 (ERRKRSRSRSRHSS) are enriched in basic residues. Over residues 302–311 (RTSDRRCSRS) the composition is skewed to basic and acidic residues. Over residues 312–367 (RDHKRSRSRDRRRSRSRDRRRSRSHDRSERKHRSRSRDRRRSKSRDRKSYKHRSKS) the composition is skewed to basic residues. The span at 368 to 414 (RDREQDRKSKEKEKKGSDDKKSSVKSSSREKQSEDTNPESKESDTKN) shows a compositional bias: basic and acidic residues. Residue S420 is modified to Phosphoserine. Positions 421–432 (EDIKSEGDTQSN) are enriched in basic and acidic residues. Residue K424 forms a Glycyl lysine isopeptide (Lys-Gly) (interchain with G-Cter in SUMO1); alternate linkage. K424 participates in a covalent cross-link: Glycyl lysine isopeptide (Lys-Gly) (interchain with G-Cter in SUMO2); alternate. S425 and S431 each carry phosphoserine.

This sequence belongs to the Luc7 family. In terms of assembly, may interact with SFRS1 and form homodimers. Interacts with JMJD6. Interacts with RBM25. Interacts with RSRC1 (via Arg/Ser-rich domain). Interacts with RRP1B.

The protein resides in the nucleus speckle. Its function is as follows. Binds cAMP regulatory element DNA sequence. May play a role in RNA splicing. The polypeptide is Luc7-like protein 3 (Luc7l3) (Mus musculus (Mouse)).